The primary structure comprises 273 residues: Shikimate kinase (273 aa).

85-95 (PVGKGLKSSSA) lines the ATP pocket.

It belongs to the GHMP kinase family. Archaeal shikimate kinase subfamily.

The protein localises to the cytoplasm. It catalyses the reaction shikimate + ATP = 3-phosphoshikimate + ADP + H(+). The protein operates within metabolic intermediate biosynthesis; chorismate biosynthesis; chorismate from D-erythrose 4-phosphate and phosphoenolpyruvate: step 5/7. The chain is Shikimate kinase from Pyrococcus furiosus (strain ATCC 43587 / DSM 3638 / JCM 8422 / Vc1).